A 437-amino-acid polypeptide reads, in one-letter code: Carbonic anhydrase 9 (437 aa).

An N-terminal signal peptide occupies residues 1–31 (MASLGPSPWAPLSTPAPTAQLLLFLLLQVSA). The segment at 32–95 (QPQGLSGMQG…RMEESLGLED (64 aa)) is proteoglycan-like (PG). Residues 32 to 390 (QPQGLSGMQG…HVNSCFTAGD (359 aa)) lie on the Extracellular side of the membrane. The segment at 34-118 (QGLSGMQGEP…HGDEKGGGHS (85 aa)) is disordered. Residues 50–79 (SGEDELGVDVLPSEEDAPEEADPPDGEDPP) show a composition bias toward acidic residues. The tract at residues 96 to 390 (LSTPEAPEHS…HVNSCFTAGD (295 aa)) is catalytic. T98 is a glycosylation site (O-linked (GlcNAc...) threonine). The 252-residue stretch at 118–369 (SHWSYGGTLL…LNGRTIEASF (252 aa)) folds into the Alpha-carbonic anhydrase domain. The cysteines at positions 135 and 315 are disulfide-linked. Residue H179 is the Proton donor/acceptor of the active site. Zn(2+) contacts are provided by H205, H207, and H230. 311–312 (TT) contributes to the substrate binding site. An N-linked (GlcNAc...) asparagine glycan is attached at N325. A helical membrane pass occupies residues 391–411 (ILALVFGLLFAVTSIAFLLQL). Topologically, residues 412–437 (RRQHRHRSGTKDRVSYSPAEMTETGA) are cytoplasmic. At Y427 the chain carries Phosphotyrosine.

The protein belongs to the alpha-carbonic anhydrase family. As to quaternary structure, forms oligomers linked by disulfide bonds. The cofactor is Zn(2+). In terms of processing, asn-325 bears high-mannose type glycan structures.

The protein resides in the nucleus. It is found in the nucleolus. The protein localises to the cell membrane. It localises to the cell projection. Its subcellular location is the microvillus membrane. It catalyses the reaction hydrogencarbonate + H(+) = CO2 + H2O. Inhibited by acetazolamide. Catalyzes the interconversion between carbon dioxide and water and the dissociated ions of carbonic acid (i.e. bicarbonate and hydrogen ions). This is Carbonic anhydrase 9 (Ca9) from Mus musculus (Mouse).